A 199-amino-acid chain; its full sequence is N-(5'-phosphoribosyl)anthranilate isomerase (199 aa).

Belongs to the TrpF family.

The catalysed reaction is N-(5-phospho-beta-D-ribosyl)anthranilate = 1-(2-carboxyphenylamino)-1-deoxy-D-ribulose 5-phosphate. The protein operates within amino-acid biosynthesis; L-tryptophan biosynthesis; L-tryptophan from chorismate: step 3/5. The polypeptide is N-(5'-phosphoribosyl)anthranilate isomerase (Streptococcus pneumoniae (strain Hungary19A-6)).